Here is a 378-residue protein sequence, read N- to C-terminus: tRNA (guanine(26)-N(2))-dimethyltransferase (378 aa).

The Trm1 methyltransferase domain maps to K4–V374. S-adenosyl-L-methionine is bound by residues R44, R69, D87, D114, and A115. The Zn(2+) site is built by C246, C249, C263, and C266.

This sequence belongs to the class I-like SAM-binding methyltransferase superfamily. Trm1 family.

The catalysed reaction is guanosine(26) in tRNA + 2 S-adenosyl-L-methionine = N(2)-dimethylguanosine(26) in tRNA + 2 S-adenosyl-L-homocysteine + 2 H(+). Its function is as follows. Dimethylates a single guanine residue at position 26 of a number of tRNAs using S-adenosyl-L-methionine as donor of the methyl groups. The protein is tRNA (guanine(26)-N(2))-dimethyltransferase of Saccharolobus islandicus (strain L.S.2.15 / Lassen #1) (Sulfolobus islandicus).